A 93-amino-acid chain; its full sequence is Protein BOLA2 (93 aa).

Cys-29 carries the S-glutathionyl cysteine; transient; alternate modification. The tract at residues Lys-72–Ala-93 is disordered.

The protein belongs to the bolA/yrbA family. In terms of assembly, homodimer. Interacts in vitro with GRXS14, GRXS15, GRXS16 and GRXS17, but not with GRXC5. Interacts in vivo only with GRXS17. Post-translationally, can be either glutathionylated or forming covalent homodimers, depending on the oxidation state.

It localises to the cytoplasm. Its subcellular location is the nucleus. May act either alone or in interaction with glutaredoxin as a redox-regulated transcriptional regulator, or as a factor regulating Fe-S cluster biogenesis. The GRXS17-BOLA2 heterodimer binds a labile, oxygen sensitive iron-sulfur cluster. The polypeptide is Protein BOLA2 (Arabidopsis thaliana (Mouse-ear cress)).